The primary structure comprises 188 residues: ATP synthase subunit b 2 (188 aa).

Residues 41-61 (FFWLVISFGFFYFFIARVIVP) traverse the membrane as a helical segment.

Belongs to the ATPase B chain family. In terms of assembly, F-type ATPases have 2 components, F(1) - the catalytic core - and F(0) - the membrane proton channel. F(1) has five subunits: alpha(3), beta(3), gamma(1), delta(1), epsilon(1). F(0) has three main subunits: a(1), b(2) and c(10-14). The alpha and beta chains form an alternating ring which encloses part of the gamma chain. F(1) is attached to F(0) by a central stalk formed by the gamma and epsilon chains, while a peripheral stalk is formed by the delta and b chains.

Its subcellular location is the cell inner membrane. In terms of biological role, f(1)F(0) ATP synthase produces ATP from ADP in the presence of a proton or sodium gradient. F-type ATPases consist of two structural domains, F(1) containing the extramembraneous catalytic core and F(0) containing the membrane proton channel, linked together by a central stalk and a peripheral stalk. During catalysis, ATP synthesis in the catalytic domain of F(1) is coupled via a rotary mechanism of the central stalk subunits to proton translocation. Component of the F(0) channel, it forms part of the peripheral stalk, linking F(1) to F(0). The b'-subunit is a diverged and duplicated form of b found in plants and photosynthetic bacteria. The protein is ATP synthase subunit b 2 (atpF2) of Bartonella bacilliformis (strain ATCC 35685 / KC583 / Herrer 020/F12,63).